We begin with the raw amino-acid sequence, 458 residues long: MFLKKHKSKLLLVPRDEEQEDAGIVAVLTDRIPSVLLVRWFDLFCFGFAMCSYALDFFSDIGIAIFHFWAGRYLSGSLVLAFALLPSVIINIISMVWMLDDEMHWKRRAHPRRTGTFELNQKRFIPLSKMIVLCICQMGPLFWYYKALYYGWMFRKSSNENTDGEKRKCFSKMVEAERDATLLRFFEAFLESAPQLIIQGSIAASYFQNYYQTGTYPYWLYFQAASLLLSIISISWSVVVQNRSLRMIRDDKVNIWPHEAVLQFCWRFLTILARIITLVALVLIFGINVVPLISVHLLVTLVHVIFLQAIHIDACTHIEKLLLLINTFIHIFIPFNMVEGNTRWRYLTAYSVEFIEMMLVCWLLPLSLNTFPYIEKVQVGVPISFIAGIAIMMMYYQFFHPNRRQLIVTQSQEDLSLNVQKSVETLTPKLESSLEISGEQNTSQDLVSELLLDVEHEN.

Topologically, residues 1 to 45 (MFLKKHKSKLLLVPRDEEQEDAGIVAVLTDRIPSVLLVRWFDLFC) are cytoplasmic. Residues 46–66 (FGFAMCSYALDFFSDIGIAIF) form a helical membrane-spanning segment. Topologically, residues 67–77 (HFWAGRYLSGS) are extracellular. Residues 78 to 98 (LVLAFALLPSVIINIISMVWM) form a helical membrane-spanning segment. Residues 99-123 (LDDEMHWKRRAHPRRTGTFELNQKR) are Cytoplasmic-facing. Residues 124–144 (FIPLSKMIVLCICQMGPLFWY) traverse the membrane as a helical segment. At 145–219 (YKALYYGWMF…YYQTGTYPYW (75 aa)) the chain is on the extracellular side. Residues 220-240 (LYFQAASLLLSIISISWSVVV) traverse the membrane as a helical segment. Over 241–274 (QNRSLRMIRDDKVNIWPHEAVLQFCWRFLTILAR) the chain is Cytoplasmic. 2 helical membrane passes run 275-295 (IITL…LISV) and 296-316 (HLLV…DACT). H317 is a topological domain (extracellular). A helical transmembrane segment spans residues 318 to 338 (IEKLLLLINTFIHIFIPFNMV). Residues 339 to 353 (EGNTRWRYLTAYSVE) lie on the Cytoplasmic side of the membrane. The helical transmembrane segment at 354–374 (FIEMMLVCWLLPLSLNTFPYI) threads the bilayer. Residues 375 to 378 (EKVQ) are Extracellular-facing. Residues 379–399 (VGVPISFIAGIAIMMMYYQFF) form a helical membrane-spanning segment. At 400–458 (HPNRRQLIVTQSQEDLSLNVQKSVETLTPKLESSLEISGEQNTSQDLVSELLLDVEHEN) the chain is on the cytoplasmic side.

This sequence belongs to the XK family. Cleavage by ced-3 activates ced-8 function in promoting phosphatidylserine exposure at the surface of apoptotic cells.

It localises to the cell membrane. It carries out the reaction a 1,2-diacyl-sn-glycero-3-phospho-L-serine(in) = a 1,2-diacyl-sn-glycero-3-phospho-L-serine(out). Phospholipid scramblase that acts downstream of ced-9 and caspase ced-3 to promote phosphatidylserine exposure on apoptotic cell surface. Phosphatidylserine is a specific marker only present at the surface of apoptotic cells and acts as a specific signal for engulfment. Regulates apoptosis kinetics during embryonic development. Not required for engulfment of germ cell corpses. The protein is Cell death abnormality protein 8 of Caenorhabditis elegans.